The sequence spans 243 residues: Probable 2-phosphosulfolactate phosphatase (243 aa).

The protein belongs to the ComB family. The cofactor is Mg(2+).

It catalyses the reaction (2R)-O-phospho-3-sulfolactate + H2O = (2R)-3-sulfolactate + phosphate. This is Probable 2-phosphosulfolactate phosphatase from Synechococcus sp. (strain CC9605).